The following is a 120-amino-acid chain: Ribonuclease P protein component (120 aa).

This sequence belongs to the RnpA family. Consists of a catalytic RNA component (M1 or rnpB) and a protein subunit.

The enzyme catalyses Endonucleolytic cleavage of RNA, removing 5'-extranucleotides from tRNA precursor.. Functionally, RNaseP catalyzes the removal of the 5'-leader sequence from pre-tRNA to produce the mature 5'-terminus. It can also cleave other RNA substrates such as 4.5S RNA. The protein component plays an auxiliary but essential role in vivo by binding to the 5'-leader sequence and broadening the substrate specificity of the ribozyme. The sequence is that of Ribonuclease P protein component from Microcystis aeruginosa (strain NIES-843 / IAM M-2473).